Consider the following 405-residue polypeptide: L-carnitine CoA-transferase (405 aa).

Residues Lys-97 and Arg-104 each coordinate CoA. Catalysis depends on Asp-169, which acts as the Nucleophile.

This sequence belongs to the CoA-transferase III family. CaiB subfamily. In terms of assembly, homodimer.

It localises to the cytoplasm. It carries out the reaction crotonobetainyl-CoA + (R)-carnitine = crotonobetaine + (R)-carnitinyl-CoA. The enzyme catalyses 4-(trimethylamino)butanoyl-CoA + (R)-carnitine = (R)-carnitinyl-CoA + 4-(trimethylamino)butanoate. It functions in the pathway amine and polyamine metabolism; carnitine metabolism. Its function is as follows. Catalyzes the reversible transfer of the CoA moiety from gamma-butyrobetainyl-CoA to L-carnitine to generate L-carnitinyl-CoA and gamma-butyrobetaine. Is also able to catalyze the reversible transfer of the CoA moiety from gamma-butyrobetainyl-CoA or L-carnitinyl-CoA to crotonobetaine to generate crotonobetainyl-CoA. This Escherichia fergusonii (strain ATCC 35469 / DSM 13698 / CCUG 18766 / IAM 14443 / JCM 21226 / LMG 7866 / NBRC 102419 / NCTC 12128 / CDC 0568-73) protein is L-carnitine CoA-transferase.